A 151-amino-acid chain; its full sequence is Macrodomain Ter protein (151 aa).

The protein belongs to the MatP family. As to quaternary structure, homodimer.

Its subcellular location is the cytoplasm. Required for spatial organization of the terminus region of the chromosome (Ter macrodomain) during the cell cycle. Prevents early segregation of duplicated Ter macrodomains during cell division. Binds specifically to matS, which is a 13 bp signature motif repeated within the Ter macrodomain. The chain is Macrodomain Ter protein from Yersinia enterocolitica serotype O:8 / biotype 1B (strain NCTC 13174 / 8081).